A 93-amino-acid polypeptide reads, in one-letter code: DNA-directed RNA polymerase subunit omega (93 aa).

This sequence belongs to the RNA polymerase subunit omega family. As to quaternary structure, the RNAP catalytic core consists of 2 alpha, 1 beta, 1 beta' and 1 omega subunit. When a sigma factor is associated with the core the holoenzyme is formed, which can initiate transcription.

It carries out the reaction RNA(n) + a ribonucleoside 5'-triphosphate = RNA(n+1) + diphosphate. Functionally, promotes RNA polymerase assembly. Latches the N- and C-terminal regions of the beta' subunit thereby facilitating its interaction with the beta and alpha subunits. This is DNA-directed RNA polymerase subunit omega from Acinetobacter baylyi (strain ATCC 33305 / BD413 / ADP1).